Here is a 323-residue protein sequence, read N- to C-terminus: Protein translocase subunit SecF (323 aa).

The next 6 membrane-spanning stretches (helical) occupy residues 19 to 39 (GVIV…FKGF), 138 to 158 (ILSL…RYEW), 162 to 182 (LASV…VIVF), 189 to 209 (EVIA…IIIF), 244 to 264 (LTVF…IIGF), and 269 to 289 (LIGT…VALL).

This sequence belongs to the SecD/SecF family. SecF subfamily. In terms of assembly, forms a complex with SecD. Part of the essential Sec protein translocation apparatus which comprises SecA, SecYEG and auxiliary proteins SecDF-YajC and YidC.

It is found in the cell inner membrane. Part of the Sec protein translocase complex. Interacts with the SecYEG preprotein conducting channel. SecDF uses the proton motive force (PMF) to complete protein translocation after the ATP-dependent function of SecA. The sequence is that of Protein translocase subunit SecF from Helicobacter pylori (strain ATCC 700392 / 26695) (Campylobacter pylori).